A 669-amino-acid polypeptide reads, in one-letter code: DNA ligase (669 aa).

NAD(+) contacts are provided by residues 33 to 37 (DLTYD), 82 to 83 (SL), and Glu-115. Lys-117 functions as the N6-AMP-lysine intermediate in the catalytic mechanism. NAD(+) contacts are provided by Arg-138, Glu-172, Lys-286, and Lys-310. Zn(2+)-binding residues include Cys-401, Cys-404, Cys-417, and Cys-422.

This sequence belongs to the NAD-dependent DNA ligase family. LigA subfamily. The cofactor is Mg(2+). Mn(2+) serves as cofactor.

It carries out the reaction NAD(+) + (deoxyribonucleotide)n-3'-hydroxyl + 5'-phospho-(deoxyribonucleotide)m = (deoxyribonucleotide)n+m + AMP + beta-nicotinamide D-nucleotide.. DNA ligase that catalyzes the formation of phosphodiester linkages between 5'-phosphoryl and 3'-hydroxyl groups in double-stranded DNA using NAD as a coenzyme and as the energy source for the reaction. It is essential for DNA replication and repair of damaged DNA. This chain is DNA ligase, found in Borrelia hermsii (strain HS1 / DAH).